A 118-amino-acid chain; its full sequence is MASQSQGIQQLLQAEKRAAEKVSEARKRKNRRLKQAKEEAQAEIEQYRLQREKEFKAKEAAALGSRGSCSTEVEKETQEKMTILQTYFRQNRDEVLDNLLAFVCDIRPEIHENYRING.

Alanine 2 is subject to N-acetylalanine.

The protein belongs to the V-ATPase G subunit family. As to quaternary structure, V-ATPase is a heteromultimeric enzyme made up of two complexes: the ATP-hydrolytic V1 complex and the proton translocation V0 complex. The V1 complex consists of three catalytic AB heterodimers that form a heterohexamer, three peripheral stalks each consisting of EG heterodimers, one central rotor including subunits D and F, and the regulatory subunits C and H. The proton translocation complex V0 consists of the proton transport subunit a, a ring of proteolipid subunits c9c'', rotary subunit d, subunits e and f, and the accessory subunits ATP6AP1/Ac45 and ATP6AP2/PRR. Kidney; localizes to early distal nephron, encompassing thick ascending limbs and distal convoluted tubules (at protein level). Ubiquitous.

The protein localises to the apical cell membrane. Its function is as follows. Subunit of the V1 complex of vacuolar(H+)-ATPase (V-ATPase), a multisubunit enzyme composed of a peripheral complex (V1) that hydrolyzes ATP and a membrane integral complex (V0) that translocates protons. V-ATPase is responsible for acidifying and maintaining the pH of intracellular compartments and in some cell types, is targeted to the plasma membrane, where it is responsible for acidifying the extracellular environment. In aerobic conditions, involved in intracellular iron homeostasis, thus triggering the activity of Fe(2+) prolyl hydroxylase (PHD) enzymes, and leading to HIF1A hydroxylation and subsequent proteasomal degradation. The chain is V-type proton ATPase subunit G 1 (ATP6V1G1) from Homo sapiens (Human).